The sequence spans 482 residues: tRNA sulfurtransferase (482 aa).

The region spanning 61 to 165 (LAIRDALTRI…DDRLLLIKGR (105 aa)) is the THUMP domain. ATP is bound by residues 183 to 184 (LI), Lys-265, Gly-287, and Gln-296. An intrachain disulfide couples Cys-344 to Cys-456. The Rhodanese domain occupies 404–482 (FGPNDVILDI…GFNNVKVYRP (79 aa)). The Cysteine persulfide intermediate role is filled by Cys-456.

The protein belongs to the ThiI family.

The protein resides in the cytoplasm. The catalysed reaction is [ThiI sulfur-carrier protein]-S-sulfanyl-L-cysteine + a uridine in tRNA + 2 reduced [2Fe-2S]-[ferredoxin] + ATP + H(+) = [ThiI sulfur-carrier protein]-L-cysteine + a 4-thiouridine in tRNA + 2 oxidized [2Fe-2S]-[ferredoxin] + AMP + diphosphate. The enzyme catalyses [ThiS sulfur-carrier protein]-C-terminal Gly-Gly-AMP + S-sulfanyl-L-cysteinyl-[cysteine desulfurase] + AH2 = [ThiS sulfur-carrier protein]-C-terminal-Gly-aminoethanethioate + L-cysteinyl-[cysteine desulfurase] + A + AMP + 2 H(+). Its pathway is cofactor biosynthesis; thiamine diphosphate biosynthesis. Its function is as follows. Catalyzes the ATP-dependent transfer of a sulfur to tRNA to produce 4-thiouridine in position 8 of tRNAs, which functions as a near-UV photosensor. Also catalyzes the transfer of sulfur to the sulfur carrier protein ThiS, forming ThiS-thiocarboxylate. This is a step in the synthesis of thiazole, in the thiamine biosynthesis pathway. The sulfur is donated as persulfide by IscS. In Shigella boydii serotype 4 (strain Sb227), this protein is tRNA sulfurtransferase.